A 549-amino-acid chain; its full sequence is Undecaprenyl phosphate-alpha-4-amino-4-deoxy-L-arabinose arabinosyl transferase (549 aa).

12 helical membrane passes run 9–29, 80–100, 112–132, 133–153, 176–196, 204–224, 256–276, 288–308, 312–332, 346–366, 376–396, and 402–422; these read LLLI…GLWI, LFGV…LAYL, SLAC…SGYA, NLDP…WHAL, FLTK…PYML, LLGY…PWAL, PWWF…GLLP, QAPV…FSLS, LPTY…HALV, NGLL…YLQL, FELF…LAQW, and AWAA…AAMP.

It belongs to the glycosyltransferase 83 family.

The protein localises to the cell inner membrane. It carries out the reaction 4-amino-4-deoxy-alpha-L-arabinopyranosyl di-trans,octa-cis-undecaprenyl phosphate + lipid IVA = lipid IIA + di-trans,octa-cis-undecaprenyl phosphate.. It functions in the pathway lipopolysaccharide metabolism; 4-amino-4-deoxy-beta-L-arabinose-lipid A biosynthesis. Functionally, catalyzes the transfer of the L-Ara4N moiety of the glycolipid undecaprenyl phosphate-alpha-L-Ara4N to lipid A. The modified arabinose is attached to lipid A and is required for resistance to polymyxin and cationic antimicrobial peptides. This Pseudomonas aeruginosa (strain LESB58) protein is Undecaprenyl phosphate-alpha-4-amino-4-deoxy-L-arabinose arabinosyl transferase.